An 81-amino-acid chain; its full sequence is Protein RALF-like 7 (81 aa).

An N-terminal signal peptide occupies residues 1-29 (MSARKKNRIHVFFVSIMIIISLVSGFGEG). 2 disulfide bridges follow: Cys-46–Cys-54 and Cys-66–Cys-72.

The protein belongs to the plant rapid alkalinization factor (RALF) family.

Its subcellular location is the secreted. Its function is as follows. Cell signaling peptide that may regulate plant stress, growth, and development. Mediates a rapid alkalinization of extracellular space by mediating a transient increase in the cytoplasmic Ca(2+) concentration leading to a calcium-dependent signaling events through a cell surface receptor and a concomitant activation of some intracellular mitogen-activated protein kinases. The chain is Protein RALF-like 7 (RALFL7) from Arabidopsis thaliana (Mouse-ear cress).